The sequence spans 1033 residues: Potassium-transporting ATPase alpha chain 2 (1033 aa).

Over 1–96 (MRRKTLEIYS…NALSPPKQTP (96 aa)) the chain is Cytoplasmic. The helical transmembrane segment at 97–117 (EIIKFLKQMIGGFSILLWVGA) threads the bilayer. Topologically, residues 118 to 140 (ILCWIAYGIQYASNQSGSLDNVY) are lumenal. Residues 141 to 161 (LGVVLALVVILTGIFAYYQEA) form a helical membrane-spanning segment. The Cytoplasmic portion of the chain corresponds to 162–297 (KSTNIMSSFS…NEKTPIATEI (136 aa)). A helical membrane pass occupies residues 298–317 (EHFVHIVAGVAVSIGILFFI). At 318 to 329 (IAVSLKYRVLDS) the chain is on the lumenal side. Residues 330 to 347 (IIFLIGIIVANVPEGLLA) traverse the membrane as a helical segment. Residues 348-781 (TVTVTLSLTA…EEGRLIFDNL (434 aa)) lie on the Cytoplasmic side of the membrane. Catalysis depends on Asp385, which acts as the 4-aspartylphosphate intermediate. Mg(2+) contacts are provided by Asp726 and Asp730. A helical membrane pass occupies residues 782–801 (KKTIAYTLTKNIAELCPFLV). Residues 802 to 811 (YIIVGLPLPI) are Lumenal-facing. Residues 812–832 (GTITILFIDLGTDIIPSIALA) traverse the membrane as a helical segment. Residues 833 to 852 (YEKVESDIMNRKPRHKKKDR) lie on the Cytoplasmic side of the membrane. The helical transmembrane segment at 853-875 (LVNHQLAIYSYLHIGLMQALGAF) threads the bilayer. Residues 876-927 (LVYFTVYAQQGFWPTSLIQLRVKWEQDYVNDLEDSYGQQWTRYQRKYLEWTG) are Lumenal-facing. The chain crosses the membrane as a helical span at residues 928–947 (YTAFFVGIMVQQIADLIIRK). Residues 948–961 (TRRNSIFQQGLFRN) are Cytoplasmic-facing. The residue at position 952 (Ser952) is a Phosphoserine; by PKA. Residues 962–980 (KVIWVGITSQIIVALILSC) traverse the membrane as a helical segment. Topologically, residues 981-995 (GLGSITALNFTMLRV) are lumenal. Residues 996-1016 (QYWFVAVPHAILIWVYDEVRK) form a helical membrane-spanning segment. At 1017-1033 (LFLRLYPGSWWDKNMYY) the chain is on the cytoplasmic side.

This sequence belongs to the cation transport ATPase (P-type) (TC 3.A.3) family. Type IIC subfamily. Composed of two subunits: alpha (catalytic) and beta. In terms of tissue distribution, found in skin, kidney and distal colon.

It localises to the membrane. The catalysed reaction is K(+)(out) + ATP + H2O + H(+)(in) = K(+)(in) + ADP + phosphate + 2 H(+)(out). Its function is as follows. Catalyzes the hydrolysis of ATP coupled with the exchange of H(+) and K(+) ions across the plasma membrane. Responsible for potassium absorption in various tissues. In Cavia porcellus (Guinea pig), this protein is Potassium-transporting ATPase alpha chain 2 (ATP12A).